The chain runs to 129 residues: Small ribosomal subunit protein uS9 (129 aa).

Belongs to the universal ribosomal protein uS9 family.

This chain is Small ribosomal subunit protein uS9, found in Helicobacter pylori (strain Shi470).